The sequence spans 370 residues: MQQDKINLLGLNQKAIEDFFISIGEKKFHARQVFKWIHKKGVIDFDSMTDLGKNLRNKLKENAEIVIPKVVFNKASKDGTHKWLIDVGGSAVETVFIPEEGRGTLCVSSQVGCTLNCSFCSTGKQGFNRNLSSAEVISQLWIAARTLSKNNGEHDFSVTNIVMMGMGEPLMNFENVVPAMDIMMDDLAYGLSRRKVTLSTSGVVPRIYDLLEQSGVSLAVSLHAPTDSLRNEIVPINKKYNIDELLEACKLYAEKGPHKHITFEYTLMEEVNDNLSDAEQLIELLRSREVPAKINLIPFNPYPGTPYRKPSNNRIHRFKEFLQHNGFVTTVRKTRGDDIDAACGQLAGDVMDKTKRKERYLKKLGDKNAI.

The active-site Proton acceptor is the Glu93. Residues 99–337 (EEGRGTLCVS…VTTVRKTRGD (239 aa)) enclose the Radical SAM core domain. Cysteines 106 and 343 form a disulfide. [4Fe-4S] cluster is bound by residues Cys113, Cys117, and Cys120. Residues 167–168 (GE), Ser199, 221–223 (SLH), and Asn300 contribute to the S-adenosyl-L-methionine site. The active-site S-methylcysteine intermediate is Cys343.

This sequence belongs to the radical SAM superfamily. RlmN family. The cofactor is [4Fe-4S] cluster.

It localises to the cytoplasm. The enzyme catalyses adenosine(2503) in 23S rRNA + 2 reduced [2Fe-2S]-[ferredoxin] + 2 S-adenosyl-L-methionine = 2-methyladenosine(2503) in 23S rRNA + 5'-deoxyadenosine + L-methionine + 2 oxidized [2Fe-2S]-[ferredoxin] + S-adenosyl-L-homocysteine. The catalysed reaction is adenosine(37) in tRNA + 2 reduced [2Fe-2S]-[ferredoxin] + 2 S-adenosyl-L-methionine = 2-methyladenosine(37) in tRNA + 5'-deoxyadenosine + L-methionine + 2 oxidized [2Fe-2S]-[ferredoxin] + S-adenosyl-L-homocysteine. Specifically methylates position 2 of adenine 2503 in 23S rRNA and position 2 of adenine 37 in tRNAs. m2A2503 modification seems to play a crucial role in the proofreading step occurring at the peptidyl transferase center and thus would serve to optimize ribosomal fidelity. The chain is Dual-specificity RNA methyltransferase RlmN from Francisella philomiragia subsp. philomiragia (strain ATCC 25017 / CCUG 19701 / FSC 153 / O#319-036).